A 212-amino-acid polypeptide reads, in one-letter code: Cytidylate kinase (212 aa).

7 to 15 (GPAASGKGT) is an ATP binding site.

It belongs to the cytidylate kinase family. Type 1 subfamily.

The protein resides in the cytoplasm. The catalysed reaction is CMP + ATP = CDP + ADP. It carries out the reaction dCMP + ATP = dCDP + ADP. In Rhodopseudomonas palustris (strain BisB18), this protein is Cytidylate kinase.